The sequence spans 471 residues: Putative multidrug resistance protein MdtD (471 aa).

Residues Met-1–Gln-11 lie on the Periplasmic side of the membrane. A helical transmembrane segment spans residues Leu-12–Ala-32. The Cytoplasmic segment spans residues Leu-33–His-48. Residues Met-49–Ala-69 form a helical membrane-spanning segment. Over Asp-70–Asn-76 the chain is Periplasmic. A helical membrane pass occupies residues Ile-77 to Thr-97. Residues Leu-98–Leu-101 are Cytoplasmic-facing. The chain crosses the membrane as a helical span at residues Leu-102–Met-124. Residues Lys-125–Thr-137 are Periplasmic-facing. The chain crosses the membrane as a helical span at residues Phe-138–Val-158. The Cytoplasmic portion of the chain corresponds to Glu-159–His-164. The helical transmembrane segment at Trp-165–Met-185 threads the bilayer. Topologically, residues Pro-186 to Asp-196 are periplasmic. The chain crosses the membrane as a helical span at residues Leu-197–Ser-217. Over Lys-218–Pro-224 the chain is Cytoplasmic. Residues Leu-225–Ala-245 traverse the membrane as a helical segment. Residues Arg-246–Thr-262 lie on the Periplasmic side of the membrane. Residues Phe-263–Met-283 traverse the membrane as a helical segment. Residues Thr-284 to Pro-285 lie on the Cytoplasmic side of the membrane. The helical transmembrane segment at Val-286–Met-306 threads the bilayer. The Periplasmic segment spans residues Val-307–Thr-341. A helical membrane pass occupies residues Leu-342–Leu-362. At Gln-363 to Ser-395 the chain is on the cytoplasmic side. The helical transmembrane segment at Met-396–Phe-416 threads the bilayer. Residues Gly-417–Thr-430 lie on the Periplasmic side of the membrane. Residues Val-431–Ala-451 form a helical membrane-spanning segment. Residues Arg-452–Gln-471 lie on the Cytoplasmic side of the membrane.

Belongs to the major facilitator superfamily. TCR/Tet family.

The protein localises to the cell inner membrane. This chain is Putative multidrug resistance protein MdtD, found in Shigella flexneri.